Consider the following 208-residue polypeptide: V-type ATP synthase subunit E (208 aa).

Belongs to the V-ATPase E subunit family.

Functionally, produces ATP from ADP in the presence of a proton gradient across the membrane. The polypeptide is V-type ATP synthase subunit E (Chlamydia felis (strain Fe/C-56) (Chlamydophila felis)).